The chain runs to 276 residues: C-type lectin domain family 12 member B (276 aa).

The Cytoplasmic portion of the chain corresponds to 1–43; that stretch reads MSEEVTYATLTFQDSAGARNNRDGNNLRKRGHPAPSPIWRHAA. The short motif at 5 to 10 is the ITIM motif element; the sequence is VTYATL. Y7 carries the phosphotyrosine modification. Residues 44–64 traverse the membrane as a helical; Signal-anchor for type II membrane protein segment; the sequence is LGLVTLCLMLLIGLVTLGMMF. At 65-276 the chain is on the extracellular side; that stretch reads LQISNDINSD…AAPVKTEDLD (212 aa). N-linked (GlcNAc...) asparagine glycans are attached at residues N91, N176, and N237. A C-type lectin domain is found at 150 to 264; that stretch reads YQNSCYYFTT…CSAEIFWICE (115 aa). 2 disulfides stabilise this stretch: C172/C263 and C242/C255.

Homodimer. Interacts (via ITIM motif) with PTPN6. Interacts (via ITIM motif) with PTPN11; this interaction triggers dephosphorylation and activation of PTPN11. In terms of processing, N-glycosylated. In terms of tissue distribution, detected in colon, heart, kidney, liver, lung, mammary gland, ovary, spleen and testis. Expressed in melanocytes (at protein level).

It is found in the cell membrane. In terms of biological role, inhibitory receptor postulated to negatively regulate immune and non-immune functions. Upon phosphorylation, recruits SH2 domain-containing PTPN6 and PTPN11 phosphatases to its ITIM motif and antagonizes activation signals. Although it inhibits KLRK1/NKG2D-mediated signaling, it does not bind known ligands of KLRK1/NKG2D and therefore is not its inhibitory counterpart. May limit activation of myeloid cell subsets in response to infection or tissue inflammation. May protect target cells against natural killer cell-mediated lysis. May negatively regulate cell cycle and differentiation of melanocytes via inactivation of STAT3. The sequence is that of C-type lectin domain family 12 member B from Homo sapiens (Human).